Consider the following 116-residue polypeptide: UPF0342 protein lhv_1666 (116 aa).

It belongs to the UPF0342 family.

This is UPF0342 protein lhv_1666 from Lactobacillus helveticus (strain DPC 4571).